The chain runs to 910 residues: DnaJ-like protein MG200 homolog (910 aa).

A J domain is found at 4–73 (AKRDYYEVLG…RANYDKYGHD (70 aa)). Disordered stretches follow at residues 102–160 (DNLS…DDIP), 260–408 (TEPS…LEQD), and 451–486 (VLSD…STAP). Residues 111 to 121 (KKEKTKTKKKG) are compositionally biased toward basic residues. Residues 273-283 (DSDAVTAATTV) are compositionally biased toward low complexity. Over residues 357 to 379 (SDEADATNEPTEQDTISEPEQET) the composition is skewed to acidic residues. The span at 451 to 462 (VLSDQNPNPQTP) shows a compositional bias: polar residues.

The protein is DnaJ-like protein MG200 homolog of Mycoplasma pneumoniae (strain ATCC 29342 / M129 / Subtype 1) (Mycoplasmoides pneumoniae).